The following is a 634-amino-acid chain: Chaperone protein HtpG (634 aa).

An a; substrate-binding region spans residues 1 to 342; sequence MTVDTDKQTL…SSDLSLNVSR (342 aa). Residues 343 to 559 are b; it reads EILQSGPVVD…QGDLGLQMRQ (217 aa). Residues 560–634 are c; that stretch reads LLEASGQAVP…LNKLLLELSV (75 aa).

Belongs to the heat shock protein 90 family. In terms of assembly, homodimer.

It localises to the cytoplasm. In terms of biological role, molecular chaperone. Has ATPase activity. This Xanthomonas oryzae pv. oryzae (strain MAFF 311018) protein is Chaperone protein HtpG.